A 250-amino-acid polypeptide reads, in one-letter code: Uridylate kinase (250 aa).

17 to 20 (KLSG) provides a ligand contact to ATP. Residue glycine 59 participates in UMP binding. Glycine 60 and arginine 64 together coordinate ATP. UMP-binding positions include aspartate 79 and 140-147 (TGNPYFTT). The ATP site is built by threonine 167, tyrosine 173, and aspartate 176.

The protein belongs to the UMP kinase family. As to quaternary structure, homohexamer.

It localises to the cytoplasm. It catalyses the reaction UMP + ATP = UDP + ADP. It participates in pyrimidine metabolism; CTP biosynthesis via de novo pathway; UDP from UMP (UMPK route): step 1/1. Inhibited by UTP. Functionally, catalyzes the reversible phosphorylation of UMP to UDP. The protein is Uridylate kinase of Myxococcus xanthus (strain DK1622).